Consider the following 405-residue polypeptide: Cytochrome b (405 aa).

Residues 44 to 64 traverse the membrane as a helical segment; that stretch reads FGSLAGIAMIIMIATGIFLAM. H94 and H108 together coordinate heme b. 8 helical membrane passes run 97-117, 124-144, 163-183, 191-211, 245-265, 303-323, 338-358, and 368-388; these read GASM…YYGS, VLWW…FMGY, FSAI…GFSV, FFSL…LHMW, FGLG…PNFF, LGGV…PWLD, GFFW…AMPA, and LATI…GWFE. H195 and H209 together coordinate heme b.

Belongs to the cytochrome b family. As to quaternary structure, the main subunits of complex b-c1 are: cytochrome b, cytochrome c1 and the Rieske protein. Requires heme b as cofactor.

It is found in the cell membrane. Component of the ubiquinol-cytochrome c reductase complex (complex III or cytochrome b-c1 complex), which is a respiratory chain that generates an electrochemical potential coupled to ATP synthesis. The chain is Cytochrome b (petB) from Rhodospirillum rubrum.